We begin with the raw amino-acid sequence, 209 residues long: MIGLIGRKVGMTRVFTEEGVSIPVTVVEVEANRVSQVKTLETDGYAAIQVTAGSKKANRVNKAEAGHFAKAGVEAGRGLWEFRLENGEEFEVGAELTVELFNETKKVDVTGTSKGKGFQGAVKRWNFRTQDMTHGNSLSHRAPGSIGQCQTPGRVFKGKKMAGHMGAERVTTQNLEIVRVDAERNLLLIKGAVPGATGGNVIVKPAVKA.

Q150 is subject to N5-methylglutamine.

This sequence belongs to the universal ribosomal protein uL3 family. Part of the 50S ribosomal subunit. Forms a cluster with proteins L14 and L19. Post-translationally, methylated by PrmB.

In terms of biological role, one of the primary rRNA binding proteins, it binds directly near the 3'-end of the 23S rRNA, where it nucleates assembly of the 50S subunit. In Vibrio parahaemolyticus serotype O3:K6 (strain RIMD 2210633), this protein is Large ribosomal subunit protein uL3.